Reading from the N-terminus, the 355-residue chain is Probable NADPH-dependent quinone reductase tdiC (355 aa).

It belongs to the zinc-containing alcohol dehydrogenase family. NADPH is required as a cofactor.

It participates in secondary metabolite biosynthesis. Functionally, probable NADPH-dependent quinone reductase; part of the gene cluster that mediates the biosynthesis of terrequinone A, an antitumor agent. The first step in the biosynthetic pathway for terrequinone A is formation of indole pyruvic acid (IPA) from L-tryptophan by the aminotransferase tdiD. The nonribosomal peptide synthase tdiA then immediately converts unstable IPA to didemethylasterriquinone D (DDAQ D), via condensation of 2 IPA molecules. The symmetric connectivity of the 2 IPA molecules is thought to arise by head-to-tail dual Claisen condensations facilitated by the TE domain. TdiB then catalyzes reverse prenylation by transferring dimethylallyl diphosphate to carbon atom 2' of DDAQ D, to yield asterriquinone C-1. Finally, tdiC and tdiE enzymes robustly convert asterriquinone C-1 to terrequinone A via a transformation involving regular prenylation at carbon atom 5, which requires elimination of the hydroxy group on C-5. This chain is Probable NADPH-dependent quinone reductase tdiC, found in Emericella nidulans (strain FGSC A4 / ATCC 38163 / CBS 112.46 / NRRL 194 / M139) (Aspergillus nidulans).